We begin with the raw amino-acid sequence, 140 residues long: Neuropeptide CCHamide-2 (140 aa).

The N-terminal stretch at M1–A22 is a signal peptide. C26 and C33 form a disulfide bridge. H37 is modified (histidine amide). Residues S41 to L140 constitute a propeptide that is removed on maturation.

In terms of tissue distribution, expressed in corpora cardiaca (CC), corpora allata (CA), antennal lobe (AL) and gnathal ganglion (GNG) (at protein level). Expression detected in few animals (at protein level).

The protein localises to the secreted. Functionally, ligand for the CCHamide-2 receptor CCHa2-R. The protein is Neuropeptide CCHamide-2 of Agrotis ipsilon (Black cutworm moth).